The following is a 107-amino-acid chain: UPF0145 protein BVU_2335 (107 aa).

Belongs to the UPF0145 family.

The sequence is that of UPF0145 protein BVU_2335 from Phocaeicola vulgatus (strain ATCC 8482 / DSM 1447 / JCM 5826 / CCUG 4940 / NBRC 14291 / NCTC 11154) (Bacteroides vulgatus).